The primary structure comprises 283 residues: Vitamin K epoxide reductase homolog (283 aa).

Over 1 to 20 (MASYLKLKAQEETWLQRHSR) the chain is Cytoplasmic. A helical membrane pass occupies residues 21–41 (LILAILAGLGSLLTAYLTYTK). At 42-66 (LTEQPAAFCTGDGGCDLVLSSRWAE) the chain is on the periplasmic side. Cysteine 50 and cysteine 56 are disulfide-bonded. Residue 59–65 (VLSSRWA) coordinates a quinone. A helical membrane pass occupies residues 67–87 (FLGIPTAAVGLLGFLGVLALA). Residues 88 to 102 (VLPDGLPLVKRWRWP) lie on the Cytoplasmic side of the membrane. Residues 103 to 123 (ALFGLVSAMTAFEMYMLYLMV) form a helical membrane-spanning segment. Residue 111-122 (MTAFEMYMLYLM) coordinates a quinone. Topologically, residues 124-128 (AVLRQ) are periplasmic. A helical membrane pass occupies residues 129–149 (FCMYCTTAIILVAGLGLVTVL). Residues cysteine 130 and cysteine 133 are joined by a disulfide bond. Residues 150 to 158 (GHRWLDGGK) lie on the Cytoplasmic side of the membrane. Residues 159-179 (LAFSYILVAFLTLVTTIGVYA) form a helical membrane-spanning segment. The Periplasmic portion of the chain corresponds to 180-283 (NQVPPPSPLA…ASGYPLEEGR (104 aa)). Residues 186–283 (SPLAVGLAAH…ASGYPLEEGR (98 aa)) form a thioredoxin-like domain region. Intrachain disulfides connect cysteine 209/cysteine 212 and cysteine 231/cysteine 244.

It belongs to the VKOR family.

Its subcellular location is the membrane. Its activity is regulated as follows. Inhibited by ferulenol. Functionally, thiol-disulfide oxidoreductase that catalyzes vitamin K-dependent disulfide bond formation in periplasmic target proteins. The polypeptide is Vitamin K epoxide reductase homolog (Synechococcus sp. (strain JA-2-3B'a(2-13)) (Cyanobacteria bacterium Yellowstone B-Prime)).